Consider the following 294-residue polypeptide: Phosphatidylglycerol--prolipoprotein diacylglyceryl transferase (294 aa).

The next 7 helical transmembrane spans lie at 10-30 (VALA…LLAF), 55-75 (LVFY…VLFY), 91-111 (WEGG…MWFF), 119-139 (AFQV…FGRI), 196-216 (PSQL…LWWY), 224-244 (MAAS…IEFF), and 258-278 (WMTK…IMLI). Residue Arg138 participates in a 1,2-diacyl-sn-glycero-3-phospho-(1'-sn-glycerol) binding.

Belongs to the Lgt family.

The protein localises to the cell inner membrane. It catalyses the reaction L-cysteinyl-[prolipoprotein] + a 1,2-diacyl-sn-glycero-3-phospho-(1'-sn-glycerol) = an S-1,2-diacyl-sn-glyceryl-L-cysteinyl-[prolipoprotein] + sn-glycerol 1-phosphate + H(+). It functions in the pathway protein modification; lipoprotein biosynthesis (diacylglyceryl transfer). Catalyzes the transfer of the diacylglyceryl group from phosphatidylglycerol to the sulfhydryl group of the N-terminal cysteine of a prolipoprotein, the first step in the formation of mature lipoproteins. In Psychrobacter arcticus (strain DSM 17307 / VKM B-2377 / 273-4), this protein is Phosphatidylglycerol--prolipoprotein diacylglyceryl transferase.